A 107-amino-acid polypeptide reads, in one-letter code: Small ribosomal subunit protein bS18c (107 aa).

Positions 85-95 are enriched in basic residues; it reads KKAQRFKRRQS. The segment at 85-107 is disordered; it reads KKAQRFKRRQSTARTVGLRTRNK.

Belongs to the bacterial ribosomal protein bS18 family. As to quaternary structure, part of the 30S ribosomal subunit.

The protein resides in the plastid. It is found in the chloroplast. The chain is Small ribosomal subunit protein bS18c from Oenothera argillicola (Appalachian evening primrose).